Here is a 357-residue protein sequence, read N- to C-terminus: SrfA-induced gene J protein (357 aa).

The segment at 1–29 (MGRVEDQIKDNYNSLSHEGERLNREAKIE) is disordered. Residues 5 to 51 (EDQIKDNYNSLSHEGERLNREAKIESEKLKNNAKLDAKDMKKDIDES) are a coiled coil. A compositionally biased stretch (basic and acidic residues) spans 17 to 29 (HEGERLNREAKIE). N-linked (GlcNAc...) asparagine glycosylation is found at asparagine 114, asparagine 157, and asparagine 172. 2 coiled-coil regions span residues 150–177 (KNFK…SNKI) and 223–270 (DETK…DAIE). Residues 290 to 307 (IWGSIGLIGGATATSYLF) traverse the membrane as a helical segment.

It localises to the membrane. This Dictyostelium discoideum (Social amoeba) protein is SrfA-induced gene J protein (sigJ).